The primary structure comprises 529 residues: 56 kDa type-specific antigen (529 aa).

Residues 1 to 22 form the signal peptide; sequence MKKIMLIASAMSALSLPFSASA. The helical transmembrane segment at 67 to 87 threads the bilayer; the sequence is LTTSMPFGGTLAAGMTIAPGF. A compositionally biased stretch (basic and acidic residues) spans 106-116; that stretch reads GKTGSDADIRS. Disordered stretches follow at residues 106–134 and 392–424; these read GKTGSDADIRSGADSPMPQRYKLTPPQPT and DGGCNGGGDNKKKRGASEDSDAGGASKGGKGKE. Residues 477–492 form a helical membrane-spanning segment; that stretch reads TGMVASGALGVAINAA.

The protein localises to the cell membrane. In terms of biological role, may be an adherent factor for rickettsial adsorption to the host-cell surface and a determinant of virulence of individual rickettsial strain. It is the major outer membrane protein. The chain is 56 kDa type-specific antigen from Orientia tsutsugamushi (Rickettsia tsutsugamushi).